The following is a 365-amino-acid chain: Isopentenyl-diphosphate delta-isomerase (365 aa).

Substrate is bound at residue 8 to 9 (RK). FMN contacts are provided by residues 67–69 (SIT), Ser97, and Asn126. 97-99 (SQR) contributes to the substrate binding site. Gln160 contributes to the substrate binding site. Glu161 contributes to the Mg(2+) binding site. Residues Lys192, Thr222, 272–274 (GIR), and 293–294 (AL) each bind FMN.

The protein belongs to the IPP isomerase type 2 family. Homooctamer. Dimer of tetramers. FMN serves as cofactor. It depends on NADPH as a cofactor. Requires Mg(2+) as cofactor.

The protein localises to the cytoplasm. The enzyme catalyses isopentenyl diphosphate = dimethylallyl diphosphate. Functionally, involved in the biosynthesis of isoprenoids. Catalyzes the 1,3-allylic rearrangement of the homoallylic substrate isopentenyl (IPP) to its allylic isomer, dimethylallyl diphosphate (DMAPP). The chain is Isopentenyl-diphosphate delta-isomerase from Methanosarcina mazei (strain ATCC BAA-159 / DSM 3647 / Goe1 / Go1 / JCM 11833 / OCM 88) (Methanosarcina frisia).